A 425-amino-acid polypeptide reads, in one-letter code: Serine--tRNA ligase (425 aa).

232–234 lines the L-serine pocket; that stretch reads TSE. ATP contacts are provided by residues 263–265 and Val-279; that span reads RRE. Position 286 (Glu-286) interacts with L-serine. An ATP-binding site is contributed by 350–353; sequence EVVS. Residue Thr-387 coordinates L-serine.

This sequence belongs to the class-II aminoacyl-tRNA synthetase family. Type-1 seryl-tRNA synthetase subfamily. Homodimer. The tRNA molecule binds across the dimer.

It localises to the cytoplasm. The catalysed reaction is tRNA(Ser) + L-serine + ATP = L-seryl-tRNA(Ser) + AMP + diphosphate + H(+). It catalyses the reaction tRNA(Sec) + L-serine + ATP = L-seryl-tRNA(Sec) + AMP + diphosphate + H(+). It functions in the pathway aminoacyl-tRNA biosynthesis; selenocysteinyl-tRNA(Sec) biosynthesis; L-seryl-tRNA(Sec) from L-serine and tRNA(Sec): step 1/1. Catalyzes the attachment of serine to tRNA(Ser). Is also able to aminoacylate tRNA(Sec) with serine, to form the misacylated tRNA L-seryl-tRNA(Sec), which will be further converted into selenocysteinyl-tRNA(Sec). This Methanocella arvoryzae (strain DSM 22066 / NBRC 105507 / MRE50) protein is Serine--tRNA ligase.